A 45-amino-acid chain; its full sequence is Natriuretic peptide OsNP-d (45 aa).

A propeptide spanning residues 1 to 5 is cleaved from the precursor; that stretch reads PAAGL. A disulfide bond links Cys-14 and Cys-30.

This sequence belongs to the natriuretic peptide family. As to expression, expressed by the venom gland.

The protein resides in the secreted. Functionally, snake venom natriuretic peptide that targets both NPR1 and NPR2. Exhibits hypotensive and vasodepressor activities. The polypeptide is Natriuretic peptide OsNP-d (Oxyuranus scutellatus scutellatus (Australian taipan)).